We begin with the raw amino-acid sequence, 2864 residues long: Genome polyprotein (2864 aa).

Polar residues-rich tracts occupy residues 1–10 and 21–32; these read MPVISTQTSP and QTQASYPVSIKT. The tract at residues 1–49 is disordered; the sequence is MPVISTQTSPVPAPRTRKNKQTQASYPVSIKTSVERGQRAKRKVQRDAR. The helical transmembrane segment at 133–153 threads the bilayer; the sequence is WATGWFGVHLFVVCLLSLACP. N-linked (GlcNAc...) asparagine; by host glycans are attached at residues Asn-165, Asn-212, and Asn-264. The chain crosses the membrane as a helical span at residues 324 to 344; sequence LIYYASRGKWYQLLLALMLYI. Asn-380, Asn-400, Asn-422, Asn-446, Asn-467, and Asn-512 each carry an N-linked (GlcNAc...) asparagine; by host glycan. The next 5 helical transmembrane spans lie at 582–602, 628–648, 660–680, 706–726, and 737–757; these read AVVL…AYLC, AGWD…FFIC, LLGF…AAAA, PRIA…LLHL, and IIGG…RFGF. Asn-782 carries N-linked (GlcNAc...) asparagine; by host glycosylation. The next 2 helical transmembrane spans lie at 790–810 and 847–867; these read FLLV…TFCV and WYSH…GVFF. The region spanning 819 to 940 is the Peptidase C18 domain; that stretch reads TSSAASFFGT…AMPPDGWAIT (122 aa). Active-site for protease NS2 activity; shared with dimeric partner residues include His-870, Glu-888, and Cys-909. The Peptidase S29 domain maps to 941–1122; the sequence is APFTLQCLSE…VCAGYHPQYT (182 aa). Residues His-997 and Asp-1021 each act as charge relay system; for serine protease NS3 activity in the active site. The Zn(2+) site is built by Cys-1037 and Cys-1039. N-linked (GlcNAc...) asparagine; by host glycosylation is present at Asn-1057. Residue Ser-1079 is the Charge relay system; for serine protease NS3 activity of the active site. The Zn(2+) site is built by Cys-1085 and His-1089. The Helicase ATP-binding domain maps to 1131–1281; that stretch reads PTVPNEYSVQ…ANITEIQLTD (151 aa). 1144 to 1151 contributes to the ATP binding site; sequence APTGSGKS. Mg(2+)-binding residues include Ser-1151 and Glu-1229. A DECH box motif is present at residues 1228 to 1231; the sequence is DECH. Residue Asn-1273 is glycosylated (N-linked (GlcNAc...) asparagine; by host). The Helicase C-terminal domain maps to 1284 to 1449; the sequence is TIPFHGKKIK…GLSSTEAQTI (166 aa). N-linked (GlcNAc...) asparagine; by host glycosylation is present at Asn-1559. 5 helical membrane-spanning segments follow: residues 1565–1585, 1653–1673, 1678–1698, 1722–1742, and 1783–1803; these read ALAV…FGAT, FLGP…GLVT, PFAS…PHKI, FMMA…GFVF, and AAGV…TAGP. A lipid anchor (S-palmitoyl cysteine; by host) is attached at Cys-1863. The helical transmembrane segment at 1864–1884 threads the bilayer; the sequence is GLIAWGLEIWQYVCNFFVICF. Cys-1905, Cys-1923, Cys-1925, and Cys-1947 together coordinate Zn(2+). 2 disordered regions span residues 2139-2178 and 2209-2266; these read TGSL…SPPV and GPDD…TKKK. Polar residues predominate over residues 2226–2240; that stretch reads SDGSWSTTTTASSYV. In terms of domain architecture, RdRp catalytic spans 2485–2603; the sequence is AVGATCDTVC…IWKSAGADAD (119 aa). Residues Asp-2491, Asp-2589, and Asp-2590 each contribute to the Mg(2+) site. N-linked (GlcNAc...) asparagine; by host glycosylation is found at Asn-2640 and Asn-2722. The helical transmembrane segment at 2844 to 2864 threads the bilayer; it reads VKYLAVIVFALGLIAVGLAIS.

As to quaternary structure, homooligomer. Interacts with E1 (via C-terminus). Interacts with the non-structural protein 5A. Part of the viral assembly initiation complex composed of NS2, E1, E2, NS3, NS4A, NS5A and the core protein. Forms a heterodimer with envelope glycoprotein E2. Interacts with the core protein. Interacts with protease NS2. Part of the viral assembly initiation complex composed of NS2, E1, E2, NS3, NS4A, NS5A and the core protein. In terms of assembly, forms a heterodimer with envelope glycoprotein E1. Part of the viral assembly initiation complex composed of NS2, E1, E2, NS3, NS4A, NS5A and the core protein. As to quaternary structure, homodimer. Interacts with envelope glycoprotein E1. Interacts with envelope glycoprotein E2. Interacts with viroporin p7. Interacts with serine protease/helicase NS3. Part of the replication complex composed of NS2, NS3, NS4A, NS4B, NS5A and the RNA-directed RNA polymerase embedded in an ER-derived membranous web. Part of the viral assembly initiation complex composed of NS2, E1, E2, NS3, NS4A, NS5A and the core protein. Interacts with protease NS2. Interacts with non-structural protein 4A; this interaction stabilizes the folding of NS3 serine protease. NS3-NS4A interaction is essential for NS3 activation and allows membrane anchorage of the latter. Interacts with host MAVS; this interaction leads to the cleavage and inhibition of host MAVS. Part of the replication complex composed of NS2, NS3, NS4A, NS4B, NS5A and the RNA-directed RNA polymerase embedded in an ER-derived membranous web. Part of the viral assembly initiation complex composed of NS2, E1, E2, NS3, NS4A, NS5A and the core protein. In terms of assembly, interacts with NS3 serine protease; this interaction stabilizes the folding of NS3 serine protease. NS3-NS4A interaction is essential for NS3 activation and allows membrane anchorage of the latter. Interacts with non-structural protein 5A (via N-terminus). Part of the replication complex composed of NS2, NS3, NS4A, NS4B, NS5A and the RNA-directed RNA polymerase embedded in an ER-derived membranous web. Part of the viral assembly initiation complex composed of NS2, E1, E2, NS3, NS4A, NS5A and the core protein. As to quaternary structure, monomer. Homodimer; dimerization is required for RNA-binding. Interacts with the core protein. Interacts (via N-terminus) with non-structural protein 4A. Interacts with non-structural protein 4B. Interacts with RNA-directed RNA polymerase. Part of the viral assembly initiation complex composed of NS2, E1, E2, NS3, NS4A, NS5A and the core protein. Part of the replication complex composed of NS2, NS3, NS4A, NS4B, NS5A and the RNA-directed RNA polymerase. The cofactor is Zn(2+). Requires Mg(2+) as cofactor. It depends on Mn(2+) as a cofactor. Specific enzymatic cleavages in vivo yield mature proteins. The structural proteins, core, E1, E2 and p7 are produced by proteolytic processing by host signal peptidases. The other proteins (p7, NS2, NS3, NS4A, NS4B, NS5A and NS5B) are cleaved by the viral proteases. Autoprocessing between NS2 and NS3 is mediated by the NS2 cysteine protease catalytic domain and regulated by the NS3 N-terminal domain. P13 may be further cleaved into p6 and p7 if the internal cleavage site is used. In terms of processing, highly N-glycosylated. Post-translationally, palmitoylated. This modification may play a role in its polymerization or in protein-protein interactions.

It localises to the virion. The protein resides in the host cytoplasm. The protein localises to the host lipid droplet. Its subcellular location is the virion membrane. It is found in the host endoplasmic reticulum membrane. It localises to the host perinuclear region. The protein resides in the host mitochondrion. The protein localises to the host nucleus. It catalyses the reaction Hydrolysis of four peptide bonds in the viral precursor polyprotein, commonly with Asp or Glu in the P6 position, Cys or Thr in P1 and Ser or Ala in P1'.. The catalysed reaction is a ribonucleoside 5'-triphosphate + H2O = a ribonucleoside 5'-diphosphate + phosphate + H(+). The enzyme catalyses ATP + H2O = ADP + phosphate + H(+). It carries out the reaction RNA(n) + a ribonucleoside 5'-triphosphate = RNA(n+1) + diphosphate. Packages viral RNA to form a viral nucleocapsid, and promotes virion budding. Participates in the viral particle production as a result of its interaction with the non-structural protein 5A. Binds RNA and may function as a RNA chaperone to induce the RNA structural rearrangements taking place during virus replication. Modulates viral translation initiation by interacting with viral IRES and 40S ribosomal subunit. Probably affects various cell signaling pathways, host immunity and lipid metabolism. In terms of biological role, forms a heterodimer with envelope glycoprotein E2, which mediates virus attachment to the host cell, virion internalization through clathrin-dependent endocytosis and fusion with host membrane. Fusion with the host cell is most likely mediated by both E1 and E2, through conformational rearrangements of the heterodimer required for fusion rather than a classical class II fusion mechanism. Functionally, forms a heterodimer with envelope glycoprotein E1, which mediates virus attachment to the host cell, virion internalization through clathrin-dependent endocytosis and fusion with host membrane. Fusion with the host cell is most likely mediated by both E1 and E2, through conformational rearrangements of the heterodimer required for fusion rather than a classical class II fusion mechanism. Its function is as follows. May function as a multimeric ion channel protein (viroporin). Cysteine protease required for the proteolytic auto-cleavage between the non-structural proteins NS2 and NS3. The N-terminus of NS3 is required for the function of NS2 protease (active region NS2-3). Promotes the initiation of viral particle assembly by mediating the interaction between structural and non-structural proteins. In terms of biological role, displays three enzymatic activities: serine protease with a chymotrypsin-like fold, NTPase and RNA helicase. NS3 serine protease, in association with NS4A, is responsible for the cleavages of NS3-NS4A, NS4A-NS4B, NS4B-NS5A and NS5A-NS5B. The NS3/NS4A complex prevents phosphorylation of host IRF3, thus preventing the establishment of dsRNA induced antiviral state. NS3 RNA helicase binds to RNA and unwinds both dsDNA and dsRNA in the 3' to 5' direction, and likely resolves RNA complicated stable secondary structures in the template strand. Cleaves host MAVS/CARDIF thereby preventing the establishment of an antiviral state. Functionally, induces a specific membrane alteration that serves as a scaffold for the virus replication complex. This membrane alteration gives rise to the so-called ER-derived membranous web that contains the replication complex. NS4B self-interaction contributes to its function in membranous web formation. Its function is as follows. Phosphorylated protein that is indispensable for viral replication and assembly. RNA-dependent RNA polymerase that performs primer-template recognition and RNA synthesis during viral replication. Initiates RNA transcription/replication at a flavin adenine dinucleotide (FAD), resulting in a 5'- FAD cap on viral RNAs. In this way, recognition of viral 5' RNA by host pattern recognition receptors can be bypassed, thereby evading activation of antiviral pathways. The chain is Genome polyprotein from Hepatitis GB virus B (GBV-B).